A 429-amino-acid chain; its full sequence is Histidine--tRNA ligase (429 aa).

This sequence belongs to the class-II aminoacyl-tRNA synthetase family. As to quaternary structure, homodimer.

Its subcellular location is the cytoplasm. The catalysed reaction is tRNA(His) + L-histidine + ATP = L-histidyl-tRNA(His) + AMP + diphosphate + H(+). This Streptococcus pneumoniae (strain 70585) protein is Histidine--tRNA ligase.